We begin with the raw amino-acid sequence, 62 residues long: Cecropin-D (62 aa).

Positions 1 to 22 (MNFTKILFFVVACVFAMRTVSA) are cleaved as a signal peptide. Residues 23-24 (AP) constitute a propeptide, removed by a dipeptidylpeptidase. Lysine amide is present on lysine 60.

The protein belongs to the cecropin family.

It is found in the secreted. In terms of biological role, cecropins have lytic and antibacterial activity against several Gram-positive and Gram-negative bacteria. The chain is Cecropin-D from Hyalophora cecropia (Cecropia moth).